We begin with the raw amino-acid sequence, 720 residues long: ABC transporter G family member STR2 (720 aa).

The Cytoplasmic portion of the chain corresponds to 1–467; sequence MRHANGRRGD…NFINIRRTPE (467 aa). Residues 25–274 form the ABC transporter domain; that stretch reads LEFSNLTYTV…LGRMGRKVPK (250 aa). ATP is bound at residue 70 to 77; the sequence is GPSGAGKS. A disordered region spans residues 313–346; sequence GAHEMSIVPPSPAPSHREGRGHDRSNKRLHLKDQ. A compositionally biased stretch (basic and acidic residues) spans 327–346; sequence SHREGRGHDRSNKRLHLKDQ. The chain crosses the membrane as a helical span at residues 468–488; it reads LFLSRLVVLTVMGIMMATMFM. At 489 to 502 the chain is on the extracellular side; it reads HPKKNLQGITNRLS. The helical transmembrane segment at 503–523 threads the bilayer; sequence FFIFTVCLFFFSSNDAVPAFI. Residues 524–547 lie on the Cytoplasmic side of the membrane; it reads QERFIFVRETSHNKYRASSYTIAG. Residues 548-568 traverse the membrane as a helical segment; sequence LITYLPFLAVQAAVYAVIVWF. Residues 569–575 are Extracellular-facing; the sequence is ALSLRGP. The helical transmembrane segment at 576–596 threads the bilayer; that stretch reads FIYFLIVLYMSLLSTNSFVVF. The Cytoplasmic segment spans residues 597 to 604; it reads VSSVVPNY. A helical transmembrane segment spans residues 605 to 625; the sequence is ILGYAAVIAFTALFFLFCGYF. Topologically, residues 626-693 are extracellular; it reads LNSHDMPQYW…QVESKKWEKV (68 aa). Residue Asn-681 is glycosylated (N-linked (GlcNAc...) asparagine). Residues 694–714 form a helical membrane-spanning segment; it reads YIMLAWAIVYRILFYIVLRFF. Residues 715–720 lie on the Cytoplasmic side of the membrane; the sequence is SKNQRT.

This sequence belongs to the ABC transporter superfamily. ABCG family. Stunted arbuscule (STR) subfamily. In terms of assembly, heterodimerizes with STR; the resulting transporter is located in the peri-arbuscular membrane.

It is found in the cell membrane. Its function is as follows. Together with STR, required for arbuscule development in arbuscular mycorrhizal (AM) symbiosis. This chain is ABC transporter G family member STR2, found in Petunia hybrida (Petunia).